The following is a 212-amino-acid chain: Ribosomal RNA small subunit methyltransferase G (212 aa).

Residues Gly-80, Leu-85, 131 to 132, and Arg-146 each bind S-adenosyl-L-methionine; that span reads AE.

This sequence belongs to the methyltransferase superfamily. RNA methyltransferase RsmG family.

Its subcellular location is the cytoplasm. The enzyme catalyses guanosine(527) in 16S rRNA + S-adenosyl-L-methionine = N(7)-methylguanosine(527) in 16S rRNA + S-adenosyl-L-homocysteine. Its function is as follows. Specifically methylates the N7 position of guanine in position 527 of 16S rRNA. The protein is Ribosomal RNA small subunit methyltransferase G of Xylella fastidiosa (strain 9a5c).